The chain runs to 197 residues: Holliday junction branch migration complex subunit RuvA (197 aa).

Residues 1-64 form a domain I region; the sequence is MIGRLRGIVA…EDSVSLYGFL (64 aa). Residues 65 to 143 form a domain II region; it reads REGERRLFRD…QFGAGGALPT (79 aa). Residues 144-153 form a flexible linker region; that stretch reads GSGPAPADPL. The tract at residues 153–197 is domain III; the sequence is LSDATVALQQLGYKPAEAARMARDAFNEGDEVATVIRKALQSALR.

Belongs to the RuvA family. Homotetramer. Forms an RuvA(8)-RuvB(12)-Holliday junction (HJ) complex. HJ DNA is sandwiched between 2 RuvA tetramers; dsDNA enters through RuvA and exits via RuvB. An RuvB hexamer assembles on each DNA strand where it exits the tetramer. Each RuvB hexamer is contacted by two RuvA subunits (via domain III) on 2 adjacent RuvB subunits; this complex drives branch migration. In the full resolvosome a probable DNA-RuvA(4)-RuvB(12)-RuvC(2) complex forms which resolves the HJ.

The protein localises to the cytoplasm. Functionally, the RuvA-RuvB-RuvC complex processes Holliday junction (HJ) DNA during genetic recombination and DNA repair, while the RuvA-RuvB complex plays an important role in the rescue of blocked DNA replication forks via replication fork reversal (RFR). RuvA specifically binds to HJ cruciform DNA, conferring on it an open structure. The RuvB hexamer acts as an ATP-dependent pump, pulling dsDNA into and through the RuvAB complex. HJ branch migration allows RuvC to scan DNA until it finds its consensus sequence, where it cleaves and resolves the cruciform DNA. This Stenotrophomonas maltophilia (strain K279a) protein is Holliday junction branch migration complex subunit RuvA.